We begin with the raw amino-acid sequence, 150 residues long: D-aminoacyl-tRNA deacylase (150 aa).

Residues 136 to 137 (GP) carry the Gly-cisPro motif, important for rejection of L-amino acids motif.

This sequence belongs to the DTD family. Homodimer.

It localises to the cytoplasm. It catalyses the reaction glycyl-tRNA(Ala) + H2O = tRNA(Ala) + glycine + H(+). The catalysed reaction is a D-aminoacyl-tRNA + H2O = a tRNA + a D-alpha-amino acid + H(+). In terms of biological role, an aminoacyl-tRNA editing enzyme that deacylates mischarged D-aminoacyl-tRNAs. Also deacylates mischarged glycyl-tRNA(Ala), protecting cells against glycine mischarging by AlaRS. Acts via tRNA-based rather than protein-based catalysis; rejects L-amino acids rather than detecting D-amino acids in the active site. By recycling D-aminoacyl-tRNA to D-amino acids and free tRNA molecules, this enzyme counteracts the toxicity associated with the formation of D-aminoacyl-tRNA entities in vivo and helps enforce protein L-homochirality. This Staphylococcus aureus (strain MRSA252) protein is D-aminoacyl-tRNA deacylase.